The chain runs to 304 residues: Developmental pluripotency-associated protein 4 (304 aa).

The span at 1 to 11 (MLRGSASSTSM) shows a compositional bias: polar residues. Disordered regions lie at residues 1-84 (MLRG…IPPL) and 147-176 (KKLK…VGEP). The segment covering 12–29 (EKAKGKEWTSTEKSREED) has biased composition (basic and acidic residues). At threonine 215 the chain carries Phosphothreonine. Serine 221 and serine 226 each carry phosphoserine.

Interacts with DPPA2. Interacts with PCGF1.

Its subcellular location is the nucleus. Its function is as follows. May be involved in the maintenance of active epigenetic status of target genes. May inhibit differentiation of embryonic cells into a primitive ectoderm lineage. This Homo sapiens (Human) protein is Developmental pluripotency-associated protein 4 (DPPA4).